A 1744-amino-acid chain; its full sequence is Complement C4-B (1744 aa).

Residues 1–19 (MRLLWGLIWASSFFTLSLQ) form the signal peptide. Cys-68 and Cys-97 are joined by a disulfide. A glycan (N-linked (GlcNAc...) asparagine) is linked at Asn-226. A disulfide bond links Cys-635 and Cys-669. A propeptide spanning residues 676 to 679 (RKKR) is cleaved from the precursor. 3 cysteine pairs are disulfide-bonded: Cys-702/Cys-728, Cys-703/Cys-735, and Cys-716/Cys-736. In terms of domain architecture, Anaphylatoxin-like spans 702 to 736 (CCQDGVTRLPMMRSCEQRAARVQQPDCREPFLSCC). Residue Asn-862 is glycosylated (N-linked (GlcNAc...) asparagine). Position 918 is a phosphoserine (Ser-918). Positions 1010 to 1013 (CGEQ) form a cross-link, isoglutamyl cysteine thioester (Cys-Gln). Residues Asn-1328 and Asn-1391 are each glycosylated (N-linked (GlcNAc...) asparagine). Sulfotyrosine is present on residues Tyr-1417, Tyr-1420, and Tyr-1422. A propeptide spanning residues 1447–1453 (RRNRRRR) is cleaved from the precursor. 5 disulfide bridges follow: Cys-1471-Cys-1535, Cys-1583-Cys-1588, Cys-1595-Cys-1673, Cys-1618-Cys-1742, and Cys-1718-Cys-1727. The region spanning 1595–1742 (CPRQRRALER…FLQEYGTQGC (148 aa)) is the NTR domain.

In terms of assembly, in absence of complement activation, circulates in blood as a disulfide-linked trimer of an alpha, beta and gamma chain. As to quaternary structure, complement C4b is composed of complement C4b-A, complement C4 beta and complement C4 gamma chains that are associated via disulfide bonds. Non-enzymatic component of the C3 convertase, also named C4bC2b, composed of the serine protease complement C2b (C2), as well as complement C4b. Non-enzymatic component of the C5 convertase, also named C4bC2bC3b, composed of the serine protease complement C2b (C2), complement C3b, as well as complement C4b. Interacts with CR1 (via Sushi 1 and Sushi 2 domains). (Microbial infection) Binds B.burgdorferi OspC, the interaction is inhibited by complement factor C2. This binding may inhibit the complement cascade and allow the bacteria to survive in the host bloodstream. Post-translationally, prior to secretion, the single-chain precursor is enzymatically cleaved by plasminogen (PLG) to yield non-identical chains alpha, beta and gamma. During activation of the complement systems, the alpha chain is cleaved into C4a and C4b by different proteases depending on the complement pathway: C4b stays linked to the beta and gamma chains, while C4a is released in the plasma. The alpha chain is cleaved by C1S to generate C4a and C4b following activation by the classical complement system. The alpha chain is cleaved to generate C4a and C4b by MASP2 following activation by the lectin complement system. The alpha chain is cleaved by GZMK to generate C4a and C4b following activation by the GZMK complement system. Further degradation of C4b by C1 into the inactive fragments C4c and C4d blocks the generation of C3 convertase. The proteolytic cleavages often are incomplete so that many structural forms can be found in plasma. In terms of processing, upon activation, the internal thioester bond reacts with carbohydrate antigens on the target surface to form amide or ester bonds, leading to covalent association with the surface of pathogens. Complement C4b interacts with complement C3b via a thioester linkage. Post-translationally, N- and O-glycosylated. O-glycosylated with a core 1 or possibly core 8 glycan. In terms of tissue distribution, complement component C4 is expressed at highest levels in the liver, at moderate levels in the adrenal cortex, adrenal medulla, thyroid gland, and the kidney, and at lowest levels in the heart, ovary, small intestine, thymus, pancreas and spleen. The extra-hepatic sites of expression may be important for the local protection and inflammatory response.

It localises to the secreted. The protein localises to the synapse. Its subcellular location is the cell projection. It is found in the axon. The protein resides in the dendrite. It localises to the cell surface. Functionally, precursor of non-enzymatic components of the classical, lectin and GZMK complement pathways, which consist in a cascade of proteins that leads to phagocytosis and breakdown of pathogens and signaling that strengthens the adaptive immune system. Its function is as follows. Non-enzymatic component of C3 and C5 convertases. Generated following cleavage by complement proteases (C1S, MASP2 or GZMK, depending on the complement pathway), it covalently attaches to the surface of pathogens, where it acts as an opsonin that marks the surface of antigens for removal. It then recruits the serine protease complement C2b to form the C3 and C5 convertases, which cleave and activate C3 and C5, respectively, the next components of the complement pathways. Complement C4b-B isotype catalyzes the transacylation of the thioester carbonyl group to form ester bonds with carbohydrate antigens, while C4b-A isotype is responsible for effective binding to form amide bonds with immune aggregates or protein antigens. Putative humoral mediator released following cleavage by complement proteases (C1S, MASP2 or GZMK, depending on the complement pathway). While it is strongly similar to anaphylatoxins, its role is unclear. Was reported to act as a mediator of local inflammatory process; however these effects were probably due to contamination with C3a and/C5a anaphylatoxins in biological assays. The sequence is that of Complement C4-B from Homo sapiens (Human).